An 85-amino-acid polypeptide reads, in one-letter code: N.vectensis toxin 6 (85 aa).

An N-terminal signal peptide occupies residues 1–20 (MISFKTVIVCLFLWVVIIGA). Disulfide bonds link Cys46-Cys82, Cys48-Cys71, and Cys64-Cys83.

Its function is as follows. Probable toxin. The chain is N.vectensis toxin 6 from Nematostella vectensis (Starlet sea anemone).